Here is a 542-residue protein sequence, read N- to C-terminus: Chaperonin GroEL (542 aa).

ATP contacts are provided by residues 29 to 32 (TLGP), 86 to 90 (DGTTT), Gly-413, 476 to 478 (NAA), and Asp-492. Positions 523-542 (EPAAPAMPGGMDPSMMGGMM) are disordered. Low complexity predominate over residues 526–542 (APAMPGGMDPSMMGGMM).

Belongs to the chaperonin (HSP60) family. In terms of assembly, forms a cylinder of 14 subunits composed of two heptameric rings stacked back-to-back. Interacts with the co-chaperonin GroES.

The protein resides in the cytoplasm. The enzyme catalyses ATP + H2O + a folded polypeptide = ADP + phosphate + an unfolded polypeptide.. In terms of biological role, together with its co-chaperonin GroES, plays an essential role in assisting protein folding. The GroEL-GroES system forms a nano-cage that allows encapsulation of the non-native substrate proteins and provides a physical environment optimized to promote and accelerate protein folding. The polypeptide is Chaperonin GroEL (Streptococcus uberis (strain ATCC BAA-854 / 0140J)).